The primary structure comprises 84 residues: Small ribosomal subunit protein eS27 (84 aa).

The C4-type zinc-finger motif lies at 38–60; that stretch reads CPKCGATTTTFSHAHRQILCQKC.

It belongs to the eukaryotic ribosomal protein eS27 family. As to quaternary structure, component of the small ribosomal subunit. Zn(2+) serves as cofactor.

It is found in the cytoplasm. Component of the small ribosomal subunit. The ribosome is a large ribonucleoprotein complex responsible for the synthesis of proteins in the cell. Required for proper rRNA processing and maturation of 18S rRNAs. The protein is Small ribosomal subunit protein eS27 (RPS27) of Entamoeba histolytica (strain ATCC 30459 / HM-1:IMSS / ABRM).